We begin with the raw amino-acid sequence, 146 residues long: D-aminoacyl-tRNA deacylase (146 aa).

Positions 137–138 (GP) match the Gly-cisPro motif, important for rejection of L-amino acids motif.

This sequence belongs to the DTD family. In terms of assembly, homodimer.

The protein resides in the cytoplasm. It catalyses the reaction glycyl-tRNA(Ala) + H2O = tRNA(Ala) + glycine + H(+). The enzyme catalyses a D-aminoacyl-tRNA + H2O = a tRNA + a D-alpha-amino acid + H(+). An aminoacyl-tRNA editing enzyme that deacylates mischarged D-aminoacyl-tRNAs. Also deacylates mischarged glycyl-tRNA(Ala), protecting cells against glycine mischarging by AlaRS. Acts via tRNA-based rather than protein-based catalysis; rejects L-amino acids rather than detecting D-amino acids in the active site. By recycling D-aminoacyl-tRNA to D-amino acids and free tRNA molecules, this enzyme counteracts the toxicity associated with the formation of D-aminoacyl-tRNA entities in vivo and helps enforce protein L-homochirality. This Bacillus cereus (strain B4264) protein is D-aminoacyl-tRNA deacylase.